The following is a 281-amino-acid chain: Sorbose reductase SOU1 (281 aa).

Residues isoleucine 47, lysine 74, and asparagine 119 each contribute to the NADP(+) site. Catalysis depends on proton donor residues serine 173 and tyrosine 188. NADP(+) is bound by residues tyrosine 188, lysine 192, isoleucine 221, and threonine 223. Lysine 192 serves as the catalytic Lowers pKa of active site Tyr.

It belongs to the short-chain dehydrogenases/reductases (SDR) family. In terms of assembly, homotetramer.

The catalysed reaction is D-sorbitol + NADP(+) = keto-L-sorbose + NADPH + H(+). The protein operates within carbohydrate degradation; L-sorbose degradation. In terms of biological role, catalyzes the NADP dependent reduction of L-sorbose to D-glucitol. Can also convert fructose to mannitol, but less efficiently. The sequence is that of Sorbose reductase SOU1 (SOU1) from Candida albicans (strain SC5314 / ATCC MYA-2876) (Yeast).